A 520-amino-acid polypeptide reads, in one-letter code: Hydroxymethylglutaryl-CoA synthase, cytoplasmic (520 aa).

Ser-4 bears the Phosphoserine mark. Asp-43 and Ala-44 together coordinate (3S)-3-hydroxy-3-methylglutaryl-CoA. 44–46 (AGK) provides a ligand contact to CoA. The residue at position 46 (Lys-46) is an N6-acetyllysine. Residue Glu-95 is the Proton donor/acceptor of the active site. (3S)-3-hydroxy-3-methylglutaryl-CoA contacts are provided by Cys-129, Asn-167, Thr-171, Ser-221, and His-264. Catalysis depends on Cys-129, which acts as the Acyl-thioester intermediate. CoA is bound at residue Asn-167. Residue Ser-221 participates in CoA binding. Residue His-264 is the Proton donor/acceptor of the active site. Positions 269 and 273 each coordinate CoA. (3S)-3-hydroxy-3-methylglutaryl-CoA-binding residues include Lys-273, Asn-343, and Ser-377. Lys-273 is modified (N6-acetyllysine). Thr-476 is modified (phosphothreonine). The disordered stretch occupies residues 492-520 (HIPSPAKKVPRLPATAAEPEAAVISNGEH). Residues Ser-495 and Ser-516 each carry the phosphoserine modification.

Belongs to the thiolase-like superfamily. HMG-CoA synthase family. As to quaternary structure, homodimer.

It localises to the cytoplasm. The catalysed reaction is acetoacetyl-CoA + acetyl-CoA + H2O = (3S)-3-hydroxy-3-methylglutaryl-CoA + CoA + H(+). Its pathway is metabolic intermediate biosynthesis; (R)-mevalonate biosynthesis; (R)-mevalonate from acetyl-CoA: step 2/3. Catalyzes the condensation of acetyl-CoA with acetoacetyl-CoA to form HMG-CoA, which is converted by HMG-CoA reductase (HMGCR) into mevalonate, a precursor for cholesterol synthesis. In Homo sapiens (Human), this protein is Hydroxymethylglutaryl-CoA synthase, cytoplasmic.